Here is a 367-residue protein sequence, read N- to C-terminus: Peptide chain release factor 2 (367 aa).

Residue Q254 is modified to N5-methylglutamine.

The protein belongs to the prokaryotic/mitochondrial release factor family. In terms of processing, methylated by PrmC. Methylation increases the termination efficiency of RF2.

It is found in the cytoplasm. Functionally, peptide chain release factor 2 directs the termination of translation in response to the peptide chain termination codons UGA and UAA. The protein is Peptide chain release factor 2 of Neisseria meningitidis serogroup A / serotype 4A (strain DSM 15465 / Z2491).